The chain runs to 336 residues: MLPFFPEPSLSYTQQNRTAVLLLNLGTPDAPTAQAVRPYLKSFLTDRRVVELPKWLWYPILHGLVLTLRPKKSAHAYEKIWFKEGSPLEVYTARQAAALAKRMPDLIVRHAMTYGNPSVADVLSELKAQGAGRLLVIPMYPQYAASSSGAAVDKVCEQLLLQRNQMSVRTVSRFYDDTGYIDAMKNHILRYWAEHGRGKKLMLSFHGVPQKHHDLGDPYPDECRHTAKLLAEALELTEDQYVVSFQSQFGRAKWVTPSTQDLFGKLPKQGVTELDVFCPGFLADCLETMEEIALMGREQFYEAGGKSYRYIPCLNDNPDWIDALVALAEENLGGWR.

Fe cation is bound by residues His206 and Glu287.

It belongs to the ferrochelatase family.

It localises to the cytoplasm. The catalysed reaction is heme b + 2 H(+) = protoporphyrin IX + Fe(2+). It participates in porphyrin-containing compound metabolism; protoheme biosynthesis; protoheme from protoporphyrin-IX: step 1/1. Functionally, catalyzes the ferrous insertion into protoporphyrin IX. The chain is Ferrochelatase from Neisseria meningitidis serogroup C / serotype 2a (strain ATCC 700532 / DSM 15464 / FAM18).